Reading from the N-terminus, the 258-residue chain is Hydroxyacylglutathione hydrolase (258 aa).

Residues histidine 56, histidine 58, aspartate 60, histidine 61, histidine 112, aspartate 132, and histidine 170 each contribute to the Zn(2+) site.

This sequence belongs to the metallo-beta-lactamase superfamily. Glyoxalase II family. In terms of assembly, monomer. Requires Zn(2+) as cofactor.

The catalysed reaction is an S-(2-hydroxyacyl)glutathione + H2O = a 2-hydroxy carboxylate + glutathione + H(+). Its pathway is secondary metabolite metabolism; methylglyoxal degradation; (R)-lactate from methylglyoxal: step 2/2. In terms of biological role, thiolesterase that catalyzes the hydrolysis of S-D-lactoyl-glutathione to form glutathione and D-lactic acid. In Pseudomonas aeruginosa (strain LESB58), this protein is Hydroxyacylglutathione hydrolase.